A 140-amino-acid chain; its full sequence is ATP synthase epsilon chain (140 aa).

The protein belongs to the ATPase epsilon chain family. As to quaternary structure, F-type ATPases have 2 components, CF(1) - the catalytic core - and CF(0) - the membrane proton channel. CF(1) has five subunits: alpha(3), beta(3), gamma(1), delta(1), epsilon(1). CF(0) has three main subunits: a, b and c.

The protein localises to the cell inner membrane. Functionally, produces ATP from ADP in the presence of a proton gradient across the membrane. The chain is ATP synthase epsilon chain from Herminiimonas arsenicoxydans.